The primary structure comprises 352 residues: Photosystem II D2 protein (352 aa).

A helical membrane pass occupies residues 40-60; it reads CAYLAVGAWFTGTTFVTSWYT. H117 lines the chlorophyll a pocket. A helical transmembrane segment spans residues 124–140; sequence GFTLRQFEIARLIGLRP. Positions 129 and 142 each coordinate pheophytin a. A helical transmembrane segment spans residues 152-165; that stretch reads VFVSVFLLYPLGQA. Residue H197 participates in chlorophyll a binding. A helical membrane pass occupies residues 207–227; the sequence is AALLCAIHGATVENTLFEDGD. A plastoquinone contacts are provided by H214 and F261. Residue H214 participates in Fe cation binding. H268 lines the Fe cation pocket. The chain crosses the membrane as a helical span at residues 278–294; sequence GLWMSAIGVVGLGVNLR.

It belongs to the reaction center PufL/M/PsbA/D family. In terms of assembly, PSII is composed of 1 copy each of membrane proteins PsbA, PsbB, PsbC, PsbD, PsbE, PsbF, PsbH, PsbI, PsbJ, PsbK, PsbL, PsbM, PsbT, PsbX, PsbY, PsbZ, Psb30/Ycf12, at least 3 peripheral proteins of the oxygen-evolving complex and a large number of cofactors. It forms dimeric complexes. Requires The D1/D2 heterodimer binds P680, chlorophylls that are the primary electron donor of PSII, and subsequent electron acceptors. It shares a non-heme iron and each subunit binds pheophytin, quinone, additional chlorophylls, carotenoids and lipids. There is also a Cl(-1) ion associated with D1 and D2, which is required for oxygen evolution. The PSII complex binds additional chlorophylls, carotenoids and specific lipids. as cofactor.

It is found in the plastid. It localises to the cyanelle thylakoid membrane. It catalyses the reaction 2 a plastoquinone + 4 hnu + 2 H2O = 2 a plastoquinol + O2. Its function is as follows. Photosystem II (PSII) is a light-driven water:plastoquinone oxidoreductase that uses light energy to abstract electrons from H(2)O, generating O(2) and a proton gradient subsequently used for ATP formation. It consists of a core antenna complex that captures photons, and an electron transfer chain that converts photonic excitation into a charge separation. The D1/D2 (PsbA/PsbD) reaction center heterodimer binds P680, the primary electron donor of PSII as well as several subsequent electron acceptors. D2 is needed for assembly of a stable PSII complex. The sequence is that of Photosystem II D2 protein from Cyanophora paradoxa.